Reading from the N-terminus, the 72-residue chain is Translation initiation factor IF-1 (72 aa).

Residues 1-72 (MAKEETIQMQ…SRARITFRAK (72 aa)) enclose the S1-like domain.

Belongs to the IF-1 family. Component of the 30S ribosomal translation pre-initiation complex which assembles on the 30S ribosome in the order IF-2 and IF-3, IF-1 and N-formylmethionyl-tRNA(fMet); mRNA recruitment can occur at any time during PIC assembly.

Its subcellular location is the cytoplasm. Its function is as follows. One of the essential components for the initiation of protein synthesis. Stabilizes the binding of IF-2 and IF-3 on the 30S subunit to which N-formylmethionyl-tRNA(fMet) subsequently binds. Helps modulate mRNA selection, yielding the 30S pre-initiation complex (PIC). Upon addition of the 50S ribosomal subunit IF-1, IF-2 and IF-3 are released leaving the mature 70S translation initiation complex. The chain is Translation initiation factor IF-1 from Nitrosospira multiformis (strain ATCC 25196 / NCIMB 11849 / C 71).